Consider the following 618-residue polypeptide: Beta-xylosidase (618 aa).

2 disordered regions span residues 76–100 and 463–509; these read ERDR…QEES and LEPQ…PPIQ.

Belongs to the glycosyl hydrolase 52 family.

Its subcellular location is the secreted. The enzyme catalyses Hydrolysis of (1-&gt;4)-beta-D-xylans, to remove successive D-xylose residues from the non-reducing termini.. It participates in glycan degradation; xylan degradation. The polypeptide is Beta-xylosidase (xylA) (Geobacillus stearothermophilus (Bacillus stearothermophilus)).